A 212-amino-acid polypeptide reads, in one-letter code: Peptide methionine sulfoxide reductase MsrA (212 aa).

Cysteine 52 is an active-site residue.

The protein belongs to the MsrA Met sulfoxide reductase family.

The enzyme catalyses L-methionyl-[protein] + [thioredoxin]-disulfide + H2O = L-methionyl-(S)-S-oxide-[protein] + [thioredoxin]-dithiol. It catalyses the reaction [thioredoxin]-disulfide + L-methionine + H2O = L-methionine (S)-S-oxide + [thioredoxin]-dithiol. Its function is as follows. Has an important function as a repair enzyme for proteins that have been inactivated by oxidation. Catalyzes the reversible oxidation-reduction of methionine sulfoxide in proteins to methionine. The sequence is that of Peptide methionine sulfoxide reductase MsrA from Salmonella choleraesuis (strain SC-B67).